We begin with the raw amino-acid sequence, 1059 residues long: Zinc finger protein 628 (1059 aa).

6 consecutive C2H2-type zinc fingers follow at residues 36-58, 64-86, 92-114, 120-142, 148-170, and 176-198; these read YECG…QRTH, YKCP…QRGH, YQCP…RSVH, FICG…LRQH, YPCP…RHVH, and YTCG…QRVH. Thr-199 carries the post-translational modification Phosphothreonine. The segment at 204 to 226 adopts a C2H2-type 7 zinc-finger fold; the sequence is FRCPLCPKTFTHSSNLLLHQRTH. Disordered stretches follow at residues 226 to 247, 260 to 280, and 312 to 351; these read HGAA…REPG, LQPH…PVVP, and EHQP…PAAA. Residues 228-237 show a composition bias toward low complexity; sequence AAPAPGTASA. A compositionally biased stretch (pro residues) spans 263 to 279; that stretch reads HSPPAPPAPPPPPPPVV. A compositionally biased stretch (low complexity) spans 323–335; it reads PQPQEAPAEAPKA. Pro residues predominate over residues 336-351; that stretch reads DQPPSPLPQPPPPAAA. 7 consecutive C2H2-type zinc fingers follow at residues 356 to 378, 386 to 408, 454 to 476, 482 to 504, 510 to 532, 538 to 560, and 566 to 588; these read FACL…QHSH, FRCG…QQCH, YKCA…LRDH, YQCG…QRVH, FTCG…LRLH, YACG…RHVH, and HACG…QRVH. Position 589 is a phosphothreonine (Thr-589). C2H2-type zinc fingers lie at residues 594 to 616 and 622 to 644; these read FRCP…QRTH and FTCP…LRTH. The span at 644 to 658 shows a compositional bias: low complexity; sequence HAPANTPPSTTAPAA. A disordered region spans residues 644 to 674; it reads HAPANTPPSTTAPAAGPQPPAPLAAARAPPA. 4 repeat units span residues 818 to 831, 832 to 842, 843 to 853, and 854 to 864. Residues 818–864 form a 4 X approximate tandem repeats region; sequence VQLQPLRPAPEVTTVQLQPAQEVTTVQLQPAQEVTTVQLQPAQEVTT. The interval 943-1059 is interaction with TAF4B; it reads DGEQTRLCVQ…LPAVQLVHTF (117 aa).

In terms of assembly, interacts with TAF4B.

The protein resides in the nucleus. Functionally, transcriptional activator. Binds DNA on GT-box consensus sequence 5'-TTGGTT-3'. Plays a role in spermiogenesis. The chain is Zinc finger protein 628 (ZNF628) from Homo sapiens (Human).